The chain runs to 595 residues: Beta-(1--&gt;2)glucan export ATP-binding/permease protein NdvA (595 aa).

The next 5 helical transmembrane spans lie at 21–41 (FLLI…EPIL), 56–76 (LVTL…YVLV), 129–149 (IWLE…VLVP), 158–178 (LSIV…LVMQ), and 252–272 (ISIV…QLSV). An ABC transmembrane type-1 domain is found at 21–301 (FLLICTANIT…ISGFINLAVS (281 aa)). Residues 335–569 (IQFHHVTYEF…DGHFYKLLKA (235 aa)) enclose the ABC transporter domain. Residue 368 to 375 (GPTGAGKT) coordinates ATP.

The protein belongs to the ABC transporter superfamily. Beta-(1--&gt;2)glucan exporter (TC 3.A.1.108.1) family. As to quaternary structure, homodimer.

The protein resides in the cell inner membrane. The enzyme catalyses [(1-&gt;2)-beta-D-glucosyl](n)(in) + ATP + H2O = [(1-&gt;2)-beta-D-glucosyl](n)(out) + ADP + phosphate + H(+). Functionally, involved in beta-(1--&gt;2)glucan export. Transmembrane domains (TMD) form a pore in the inner membrane and the ATP-binding domain (NBD) is responsible for energy generation. The sequence is that of Beta-(1--&gt;2)glucan export ATP-binding/permease protein NdvA from Bartonella bacilliformis (strain ATCC 35685 / KC583 / Herrer 020/F12,63).